Consider the following 190-residue polypeptide: GTP cyclohydrolase 1 (190 aa).

Residues Cys75, His78, and Cys146 each coordinate Zn(2+).

Belongs to the GTP cyclohydrolase I family. In terms of assembly, toroid-shaped homodecamer, composed of two pentamers of five dimers.

It carries out the reaction GTP + H2O = 7,8-dihydroneopterin 3'-triphosphate + formate + H(+). Its pathway is cofactor biosynthesis; 7,8-dihydroneopterin triphosphate biosynthesis; 7,8-dihydroneopterin triphosphate from GTP: step 1/1. The chain is GTP cyclohydrolase 1 from Campylobacter curvus (strain 525.92).